The following is a 524-amino-acid chain: MSWHPQYRSSKFRHVYGKPASKENCYDSVPITRSVHDNHFCAVNPHFIAVVTECAGGGAFLVIPLHQTGKLDPHYPKVCGHRGNVLDIKWNPFNDFEIASCSEDATIKIWNIPKQLLTRNLTTYRKELIGHARRVGLVEWHPTTANILFSAGYDYKVMVWNLDTKDSVIAGPVKTINCHQDVILSMSFNTNGSLLATTCKDRKIRIVDPRLGIVLQEASYKGHRANKVLFLGSLKKLLSTGTSRWNNRQMALWDQENLSVPLTEEDLDGSSGVLFPFFDSDTSMLYIVGKGDGNIRYYEVSMEKPHLTYLTEYRSYNPQKGIGIMPKRGLDVSSCEIFRFYKLITTKSLIEPVSMIVPRRSESYQEDIYPPTAAAQPSLTAHEWLSGMNRGPIMMSLRPGSELLDSQTLPPERPLSNSMVQVSPQPLEPMKQPAEDGDQAPFSLLEEKLAKWTAEHHLGEKSCLTNGFDVFECSPPKTENELLQMFYRQQEEIRRLRELLIQREVQTKQLELEIKNLRMALGQL.

WD repeat units follow at residues 80 to 120 (GHRG…LTRN), 130 to 170 (GHAR…SVIA), 178 to 217 (CHQD…VLQE), 220 to 263 (YKGH…VPLT), and 269 to 308 (GSSG…PHLT). The interval 403 to 436 (LLDSQTLPPERPLSNSMVQVSPQPLEPMKQPAED) is disordered. Polar residues predominate over residues 404 to 424 (LDSQTLPPERPLSNSMVQVSP). The stretch at 484–523 (QMFYRQQEEIRRLRELLIQREVQTKQLELEIKNLRMALGQ) forms a coiled coil.

This sequence belongs to the WD repeat coronin family. As to quaternary structure, binds actin. Component of the N-Cor repressor complex, at least composed of NCOR1, NCOR2, HDAC3, TBL1X, TBL1R, CORO2A and GPS2.

This is Coronin-2A (Coro2a) from Mus musculus (Mouse).